The sequence spans 189 residues: Notch ligand osm-11 (189 aa).

Residues 1-18 (MNFITVAALAIVMVLAQA) form the signal peptide.

In terms of assembly, may interact with lin-12/Notch receptor. In terms of tissue distribution, expressed in coelomocytes (at protein level).

Its subcellular location is the apical cell membrane. Its function is as follows. Probable secreted lin-12/Notch ligand or co-ligand involved in the mediation of Notch signaling. Involved in the lin-12/Notch pathway signaling of cell fate in vulval precursor cells (VPCs), acting redundantly with dsl-1 and lag-2. Required for normal octanol avoidance response, acting via both lin-12/Notch and glp-1/Notch signaling pathways in neurons, in concert with lag-2. Involved in regulation of sleep-like quiescence during the larval to adult transition, acting via Notch receptor activation and in parallel with EGF signaling. The chain is Notch ligand osm-11 from Caenorhabditis elegans.